The following is a 430-amino-acid chain: CinA-like protein (430 aa).

This sequence belongs to the CinA family.

The sequence is that of CinA-like protein from Prochlorococcus marinus (strain NATL1A).